The sequence spans 344 residues: Isopentenyl-diphosphate delta-isomerase (344 aa).

Arg-9–Lys-10 lines the substrate pocket. Residues Ala-65–Thr-67, Ser-95, and Asn-124 contribute to the FMN site. Gln-154 provides a ligand contact to substrate. Glu-155 contacts Mg(2+). FMN-binding positions include Lys-185, Thr-215, Gly-259–Arg-261, and Ser-280–Gly-281.

Belongs to the IPP isomerase type 2 family. In terms of assembly, homooctamer. Dimer of tetramers. Requires FMN as cofactor. NADPH serves as cofactor. It depends on Mg(2+) as a cofactor.

The protein resides in the cytoplasm. The enzyme catalyses isopentenyl diphosphate = dimethylallyl diphosphate. Its function is as follows. Involved in the biosynthesis of isoprenoids. Catalyzes the 1,3-allylic rearrangement of the homoallylic substrate isopentenyl (IPP) to its allylic isomer, dimethylallyl diphosphate (DMAPP). The chain is Isopentenyl-diphosphate delta-isomerase from Lacticaseibacillus paracasei (strain ATCC 334 / BCRC 17002 / CCUG 31169 / CIP 107868 / KCTC 3260 / NRRL B-441) (Lactobacillus paracasei).